Consider the following 277-residue polypeptide: MAAPTRRTVLGLARCWRRFESPWSLGSRSLTLAAAPSNSASPWRLLGALCLQRPPLVSKQLTPMQEEMAALLQQMEIERSLYSDHELRALDEAEQLEKKKSDLYEEKDEKNILLVQDLEDMWEQKFLQFKPGARITDADVKNDRSSLHRKLDRNLILLVKDKLGDQDVWMLPQAEWQPGETLRQTAERTLATLSENNLEAKFLGNAPCGHYKFKFPQAVRAEGSLGAKIFFFKALLLTGDFSPAVEKGRHVWASKEELGDYLKPKYLAQVRRFLLDL.

K228 carries the N6-acetyllysine modification.

The protein belongs to the mitochondrion-specific ribosomal protein mL46 family. Component of the mitochondrial ribosome large subunit (39S) which comprises a 16S rRNA and about 50 distinct proteins.

Its subcellular location is the mitochondrion. The sequence is that of Large ribosomal subunit protein mL46 (MRPL46) from Bos taurus (Bovine).